A 343-amino-acid chain; its full sequence is DNA-directed RNA polymerase subunit alpha (343 aa).

Positions Met-1–Glu-239 are alpha N-terminal domain (alpha-NTD). The alpha C-terminal domain (alpha-CTD) stretch occupies residues Phe-255–Tyr-343.

This sequence belongs to the RNA polymerase alpha chain family. Homodimer. The RNAP catalytic core consists of 2 alpha, 1 beta, 1 beta' and 1 omega subunit. When a sigma factor is associated with the core the holoenzyme is formed, which can initiate transcription.

The catalysed reaction is RNA(n) + a ribonucleoside 5'-triphosphate = RNA(n+1) + diphosphate. In terms of biological role, DNA-dependent RNA polymerase catalyzes the transcription of DNA into RNA using the four ribonucleoside triphosphates as substrates. In Bradyrhizobium sp. (strain BTAi1 / ATCC BAA-1182), this protein is DNA-directed RNA polymerase subunit alpha.